Consider the following 236-residue polypeptide: MTKIYWNINLEEMMEAGVHFGHGTRKWNPKMAPYISAKRKGIHITNLTGTARFLSEACDLVFDAASRGKQFLIVGTKNKAADSVARASIRARCHYVNKKWLGGMLTNWSTTETRLHKFRDLRMEQKMGGLNRLPKRDATILKRQLARLQTYLGGMKYMTGLPDIAIIVDQHKEYTALQECITLGIPTICLIDTNCDPNLSDISIPANDDAISSIRFILNKLVFAICEGRSSYIINP.

It belongs to the universal ribosomal protein uS2 family.

The protein resides in the plastid. It is found in the chloroplast. This is Small ribosomal subunit protein uS2c (rps2) from Ipomoea purpurea (Common morning glory).